Consider the following 253-residue polypeptide: Imidazole glycerol phosphate synthase subunit HisF (253 aa).

Active-site residues include aspartate 11 and aspartate 130.

The protein belongs to the HisA/HisF family. As to quaternary structure, heterodimer of HisH and HisF.

Its subcellular location is the cytoplasm. The catalysed reaction is 5-[(5-phospho-1-deoxy-D-ribulos-1-ylimino)methylamino]-1-(5-phospho-beta-D-ribosyl)imidazole-4-carboxamide + L-glutamine = D-erythro-1-(imidazol-4-yl)glycerol 3-phosphate + 5-amino-1-(5-phospho-beta-D-ribosyl)imidazole-4-carboxamide + L-glutamate + H(+). It participates in amino-acid biosynthesis; L-histidine biosynthesis; L-histidine from 5-phospho-alpha-D-ribose 1-diphosphate: step 5/9. Functionally, IGPS catalyzes the conversion of PRFAR and glutamine to IGP, AICAR and glutamate. The HisF subunit catalyzes the cyclization activity that produces IGP and AICAR from PRFAR using the ammonia provided by the HisH subunit. This chain is Imidazole glycerol phosphate synthase subunit HisF, found in Roseobacter denitrificans (strain ATCC 33942 / OCh 114) (Erythrobacter sp. (strain OCh 114)).